The following is a 362-amino-acid chain: DNA replication and repair protein RecF (362 aa).

Residue Gly30–Ser37 coordinates ATP.

The protein belongs to the RecF family.

The protein localises to the cytoplasm. The RecF protein is involved in DNA metabolism; it is required for DNA replication and normal SOS inducibility. RecF binds preferentially to single-stranded, linear DNA. It also seems to bind ATP. This is DNA replication and repair protein RecF from Thermoanaerobacter sp. (strain X514).